A 505-amino-acid polypeptide reads, in one-letter code: ATP synthase subunit alpha (505 aa).

171–178 contacts ATP; sequence GDRQTGKT.

The protein belongs to the ATPase alpha/beta chains family. F-type ATPases have 2 components, CF(1) - the catalytic core - and CF(0) - the membrane proton channel. CF(1) has five subunits: alpha(3), beta(3), gamma(1), delta(1), epsilon(1). CF(0) has three main subunits: a(1), b(2) and c(9-12). The alpha and beta chains form an alternating ring which encloses part of the gamma chain. CF(1) is attached to CF(0) by a central stalk formed by the gamma and epsilon chains, while a peripheral stalk is formed by the delta and b chains.

It is found in the cell inner membrane. The enzyme catalyses ATP + H2O + 4 H(+)(in) = ADP + phosphate + 5 H(+)(out). In terms of biological role, produces ATP from ADP in the presence of a proton gradient across the membrane. The alpha chain is a regulatory subunit. The sequence is that of ATP synthase subunit alpha from Campylobacter fetus subsp. fetus (strain 82-40).